We begin with the raw amino-acid sequence, 356 residues long: GTPase Obg (356 aa).

The 159-residue stretch at 1-159 (MKFLDEAKVY…RWIWLRMKLI (159 aa)) folds into the Obg domain. The OBG-type G domain maps to 160 to 327 (ADAGLVGLPN…ALRKLADVVG (168 aa)). Residues 166–173 (GLPNAGKS), 191–195 (FTTLH), 212–215 (DIPG), 279–282 (NKID), and 308–310 (SGA) contribute to the GTP site. Mg(2+) is bound by residues serine 173 and threonine 193. The disordered stretch occupies residues 327–356 (GEQPVSSKAKNAVESAATEEPWAAPVPPQG).

The protein belongs to the TRAFAC class OBG-HflX-like GTPase superfamily. OBG GTPase family. As to quaternary structure, monomer. Requires Mg(2+) as cofactor.

Its subcellular location is the cytoplasm. Functionally, an essential GTPase which binds GTP, GDP and possibly (p)ppGpp with moderate affinity, with high nucleotide exchange rates and a fairly low GTP hydrolysis rate. Plays a role in control of the cell cycle, stress response, ribosome biogenesis and in those bacteria that undergo differentiation, in morphogenesis control. The sequence is that of GTPase Obg from Bradyrhizobium sp. (strain ORS 278).